The chain runs to 298 residues: N-acetylmuramic acid 6-phosphate etherase (298 aa).

Residues 55–218 (IHAQVSGGGR…STGLMIKSGK (164 aa)) form the SIS domain. Glu83 serves as the catalytic Proton donor. Residue Glu114 is part of the active site.

It belongs to the GCKR-like family. MurNAc-6-P etherase subfamily. Homodimer.

The enzyme catalyses N-acetyl-D-muramate 6-phosphate + H2O = N-acetyl-D-glucosamine 6-phosphate + (R)-lactate. It participates in amino-sugar metabolism; 1,6-anhydro-N-acetylmuramate degradation. The protein operates within amino-sugar metabolism; N-acetylmuramate degradation. Its pathway is cell wall biogenesis; peptidoglycan recycling. In terms of biological role, specifically catalyzes the cleavage of the D-lactyl ether substituent of MurNAc 6-phosphate, producing GlcNAc 6-phosphate and D-lactate. Together with AnmK, is also required for the utilization of anhydro-N-acetylmuramic acid (anhMurNAc) either imported from the medium or derived from its own cell wall murein, and thus plays a role in cell wall recycling. This is N-acetylmuramic acid 6-phosphate etherase from Escherichia fergusonii (strain ATCC 35469 / DSM 13698 / CCUG 18766 / IAM 14443 / JCM 21226 / LMG 7866 / NBRC 102419 / NCTC 12128 / CDC 0568-73).